The following is a 170-amino-acid chain: Peptide deformylase (170 aa).

Fe cation contacts are provided by Cys94 and His136. Glu137 is an active-site residue. Residue His140 coordinates Fe cation.

The protein belongs to the polypeptide deformylase family. Fe(2+) serves as cofactor.

The catalysed reaction is N-terminal N-formyl-L-methionyl-[peptide] + H2O = N-terminal L-methionyl-[peptide] + formate. Its function is as follows. Removes the formyl group from the N-terminal Met of newly synthesized proteins. Requires at least a dipeptide for an efficient rate of reaction. N-terminal L-methionine is a prerequisite for activity but the enzyme has broad specificity at other positions. The polypeptide is Peptide deformylase (Xylella fastidiosa (strain 9a5c)).